Reading from the N-terminus, the 196-residue chain is Ras-related protein RabC (196 aa).

A GTP-binding site is contributed by G13 to S20. An Effector region motif is present at residues F35–F43. GTP is bound by residues D63–Q67 and N121–D124. 2 S-geranylgeranyl cysteine lipidation sites follow: C195 and C196.

It belongs to the small GTPase superfamily. Rab family.

Its subcellular location is the cell membrane. The sequence is that of Ras-related protein RabC (rabC) from Dictyostelium discoideum (Social amoeba).